Consider the following 145-residue polypeptide: MNKLSRQNKIKQIIRSKHIGTQEELKHQLELEKVFVTQATLSRDMRELGLFKSRDKEGYLYYEIPENGSTIFTPAALYYIKKVFRTDALLVFHTNLGEADVLANLIDSESHSEILGTVAGADTLLVICKNEEIASQLESDVLSNL.

This sequence belongs to the ArgR family.

The protein resides in the cytoplasm. It functions in the pathway amino-acid biosynthesis; L-arginine biosynthesis [regulation]. Functionally, regulates arginine biosynthesis genes. The chain is Arginine repressor from Streptococcus mutans serotype c (strain ATCC 700610 / UA159).